The sequence spans 154 residues: SsrA-binding protein (154 aa).

The protein belongs to the SmpB family.

The protein resides in the cytoplasm. Required for rescue of stalled ribosomes mediated by trans-translation. Binds to transfer-messenger RNA (tmRNA), required for stable association of tmRNA with ribosomes. tmRNA and SmpB together mimic tRNA shape, replacing the anticodon stem-loop with SmpB. tmRNA is encoded by the ssrA gene; the 2 termini fold to resemble tRNA(Ala) and it encodes a 'tag peptide', a short internal open reading frame. During trans-translation Ala-aminoacylated tmRNA acts like a tRNA, entering the A-site of stalled ribosomes, displacing the stalled mRNA. The ribosome then switches to translate the ORF on the tmRNA; the nascent peptide is terminated with the 'tag peptide' encoded by the tmRNA and targeted for degradation. The ribosome is freed to recommence translation, which seems to be the essential function of trans-translation. The chain is SsrA-binding protein from Lachnoclostridium phytofermentans (strain ATCC 700394 / DSM 18823 / ISDg) (Clostridium phytofermentans).